A 1178-amino-acid polypeptide reads, in one-letter code: Mediator of RNA polymerase II transcription subunit 14 (1178 aa).

Over residues methionine 1 to threonine 12 the composition is skewed to polar residues. 2 disordered regions span residues methionine 1–valine 50 and leucine 1064–aspartate 1178. 2 stretches are compositionally biased toward low complexity: residues proline 1074–alanine 1112 and histidine 1119–arginine 1164.

This sequence belongs to the Mediator complex subunit 14 family. Component of the Mediator complex.

It is found in the nucleus. In terms of biological role, component of the Mediator complex, a coactivator involved in the regulated transcription of nearly all RNA polymerase II-dependent genes. Mediator functions as a bridge to convey information from gene-specific regulatory proteins to the basal RNA polymerase II transcription machinery. Mediator is recruited to promoters by direct interactions with regulatory proteins and serves as a scaffold for the assembly of a functional preinitiation complex with RNA polymerase II and the general transcription factors. This chain is Mediator of RNA polymerase II transcription subunit 14 (RGR1), found in Chaetomium globosum (strain ATCC 6205 / CBS 148.51 / DSM 1962 / NBRC 6347 / NRRL 1970) (Soil fungus).